Consider the following 321-residue polypeptide: Lipoyl synthase (321 aa).

Residues cysteine 68, cysteine 73, cysteine 79, cysteine 94, cysteine 98, cysteine 101, and serine 308 each coordinate [4Fe-4S] cluster. A Radical SAM core domain is found at 80–297; that stretch reads FNHGTATFMI…KEVALELGFT (218 aa).

This sequence belongs to the radical SAM superfamily. Lipoyl synthase family. The cofactor is [4Fe-4S] cluster.

The protein resides in the cytoplasm. It carries out the reaction [[Fe-S] cluster scaffold protein carrying a second [4Fe-4S](2+) cluster] + N(6)-octanoyl-L-lysyl-[protein] + 2 oxidized [2Fe-2S]-[ferredoxin] + 2 S-adenosyl-L-methionine + 4 H(+) = [[Fe-S] cluster scaffold protein] + N(6)-[(R)-dihydrolipoyl]-L-lysyl-[protein] + 4 Fe(3+) + 2 hydrogen sulfide + 2 5'-deoxyadenosine + 2 L-methionine + 2 reduced [2Fe-2S]-[ferredoxin]. The protein operates within protein modification; protein lipoylation via endogenous pathway; protein N(6)-(lipoyl)lysine from octanoyl-[acyl-carrier-protein]: step 2/2. Catalyzes the radical-mediated insertion of two sulfur atoms into the C-6 and C-8 positions of the octanoyl moiety bound to the lipoyl domains of lipoate-dependent enzymes, thereby converting the octanoylated domains into lipoylated derivatives. The sequence is that of Lipoyl synthase from Vibrio parahaemolyticus serotype O3:K6 (strain RIMD 2210633).